The chain runs to 157 residues: uncharacterized protein (157 aa).

This is an uncharacterized protein from Saccharomyces cerevisiae (strain ATCC 204508 / S288c) (Baker's yeast).